The following is a 305-amino-acid chain: FMRFamide-related peptides type HF-4 (305 aa).

Positions 1–19 (MTSLCLTIAPAVLSLICLS) are cleaved as a signal peptide. Residues F36, F47, and F66 each carry the phenylalanine amide modification. At I75 the chain carries Isoleucine amide. A phenylalanine amide mark is found at F84 and F93. At I102 the chain carries Isoleucine amide. Phenylalanine amide occurs at positions 111, 120, 129, 138, 147, 156, and 165. A propeptide spanning residues 168-305 (SVDGEIEAGV…EHKQEYMRFG (138 aa)) is cleaved from the precursor.

The protein belongs to the FARP (FMRFamide related peptide) family. Central nervous system.

The protein localises to the secreted. Can function as both cardioregulatory hormones and transmitters and may regulate cardiovascular function. The sequence is that of FMRFamide-related peptides type HF-4 from Cornu aspersum (Brown garden snail).